A 243-amino-acid chain; its full sequence is Probable transcriptional regulatory protein Ldb0677 (243 aa).

Residues 1 to 22 are disordered; sequence MSGHSKWHNIQGRKNAQDAKRG.

This sequence belongs to the TACO1 family.

The protein localises to the cytoplasm. This chain is Probable transcriptional regulatory protein Ldb0677, found in Lactobacillus delbrueckii subsp. bulgaricus (strain ATCC 11842 / DSM 20081 / BCRC 10696 / JCM 1002 / NBRC 13953 / NCIMB 11778 / NCTC 12712 / WDCM 00102 / Lb 14).